Here is a 452-residue protein sequence, read N- to C-terminus: MSSTVSTLWRDCLLQLQDQVSSNDFTTWLRPLQDDVSESNMILYAPNCFIKGWVENHYLTQITKLAQQLLNNDQFMVKIQDGIKPTEKTTTNVEQKTQNENCHNEITSQQNYRSYLNKNHVFDNFVEGKSNQLARAVAQKVAKNPGEQSANPLFLYGGTGLGKTHLLHAVGNGILANNPHAQVVYMHAERFMQSYVKALKSDRMDSFKRFYRTVDALLIDDIQFFAGKDGTQEEFFHIFNSLFERGRQIILTSDRYPKEIEKIEDRLKSRFGWGISVAIEPPELETRVAILLKKAEEKNMVLPEEVAMFIGGKLRTNVRELEGALNRVHAHAEFTGKAITIDFVRETLKDMLALQDKLVTIENIQKIVADYYRIKISDLKSKRRSRNITRPRQLAMALAKELTNRSLPEIGRNFGDRDHTTVLHACKAIAKLREEDNGIQEDWSNLIRTLSV.

The domain I, interacts with DnaA modulators stretch occupies residues 1 to 80 (MSSTVSTLWR…NNDQFMVKIQ (80 aa)). The tract at residues 80–114 (QDGIKPTEKTTTNVEQKTQNENCHNEITSQQNYRS) is domain II. The interval 115-332 (YLNKNHVFDN…GALNRVHAHA (218 aa)) is domain III, AAA+ region. Positions 160, 162, 163, and 164 each coordinate ATP. The tract at residues 333 to 452 (EFTGKAITID…WSNLIRTLSV (120 aa)) is domain IV, binds dsDNA.

This sequence belongs to the DnaA family. As to quaternary structure, oligomerizes as a right-handed, spiral filament on DNA at oriC.

The protein localises to the cytoplasm. Its function is as follows. Plays an essential role in the initiation and regulation of chromosomal replication. ATP-DnaA binds to the origin of replication (oriC) to initiate formation of the DNA replication initiation complex once per cell cycle. Binds the DnaA box (a 9 base pair repeat at the origin) and separates the double-stranded (ds)DNA. Forms a right-handed helical filament on oriC DNA; dsDNA binds to the exterior of the filament while single-stranded (ss)DNA is stabiized in the filament's interior. The ATP-DnaA-oriC complex binds and stabilizes one strand of the AT-rich DNA unwinding element (DUE), permitting loading of DNA polymerase. After initiation quickly degrades to an ADP-DnaA complex that is not apt for DNA replication. Binds acidic phospholipids. The protein is Chromosomal replication initiator protein DnaA of Histophilus somni (strain 129Pt) (Haemophilus somnus).